The chain runs to 188 residues: CASP-like protein 4B1 (188 aa).

Residues 1 to 34 (MTNPDNMKPVEATDVESAAEKTSEPTPASGTSTI) are disordered. At 1 to 46 (MTNPDNMKPVEATDVESAAEKTSEPTPASGTSTITQRWKREDLIKK) the chain is on the cytoplasmic side. Over residues 24–34 (EPTPASGTSTI) the composition is skewed to polar residues. The chain crosses the membrane as a helical span at residues 47–67 (ASPITRGICLLFSLIAFLIMV). The Extracellular segment spans residues 68-84 (SNKHGYGRNFNDYEEYR). Residues 85–105 (YVLAISIISTLYTAWQTFAHF) traverse the membrane as a helical segment. Residues 106-124 (SKREIFDRRTSILVDFSGD) lie on the Cytoplasmic side of the membrane. A helical transmembrane segment spans residues 125 to 145 (QIVAYLLISAASSAIPLTNIF). At 146–156 (REGQDNIFTDS) the chain is on the extracellular side. A helical membrane pass occupies residues 157–177 (AASAISMAIFAFIALALSALF). The Cytoplasmic segment spans residues 178 to 188 (SGYKLSTHSFI).

It belongs to the Casparian strip membrane proteins (CASP) family. Homodimer and heterodimers.

The protein resides in the cell membrane. The polypeptide is CASP-like protein 4B1 (Arabidopsis thaliana (Mouse-ear cress)).